The sequence spans 110 residues: Acylphosphatase (110 aa).

Residues Arg-24–Arg-110 enclose the Acylphosphatase-like domain. Active-site residues include Arg-39 and Asn-57.

Belongs to the acylphosphatase family.

The catalysed reaction is an acyl phosphate + H2O = a carboxylate + phosphate + H(+). The sequence is that of Acylphosphatase (acyP) from Rubrobacter xylanophilus (strain DSM 9941 / JCM 11954 / NBRC 16129 / PRD-1).